A 415-amino-acid chain; its full sequence is Ankyrin repeat domain-containing protein 10 (415 aa).

4 ANK repeats span residues 20-49 (SLRF…RAHL), 56-85 (YGWT…SLNV), 90-119 (YAQT…NINK), and 123-152 (EGET…HTDL). Residues 303–325 (TGSNGVSNGQPLSSGQASVSANG) are compositionally biased toward polar residues. The interval 303-330 (TGSNGVSNGQPLSSGQASVSANGTEEPE) is disordered.

This Mus musculus (Mouse) protein is Ankyrin repeat domain-containing protein 10 (Ankrd10).